A 372-amino-acid chain; its full sequence is Cyclin-J (372 aa).

The Cyclin N-terminal domain maps to 15–143; the sequence is DIHQALRYKE…LLETFQWNLC (129 aa).

The protein belongs to the cyclin family.

The chain is Cyclin-J (CCNJ) from Homo sapiens (Human).